Consider the following 550-residue polypeptide: Chaperonin GroEL 1 (550 aa).

ATP is bound by residues threonine 29–proline 32, aspartate 86–threonine 90, glycine 413, asparagine 477–alanine 479, and aspartate 493. Residues alanine 524–phenylalanine 550 are disordered. A compositionally biased stretch (basic residues) spans serine 533–serine 543.

Belongs to the chaperonin (HSP60) family. Forms a cylinder of 14 subunits composed of two heptameric rings stacked back-to-back. Interacts with the co-chaperonin GroES.

Its subcellular location is the cytoplasm. The enzyme catalyses ATP + H2O + a folded polypeptide = ADP + phosphate + an unfolded polypeptide.. Functionally, together with its co-chaperonin GroES, plays an essential role in assisting protein folding. The GroEL-GroES system forms a nano-cage that allows encapsulation of the non-native substrate proteins and provides a physical environment optimized to promote and accelerate protein folding. The chain is Chaperonin GroEL 1 from Frankia alni (strain DSM 45986 / CECT 9034 / ACN14a).